A 52-amino-acid chain; its full sequence is Metchnikowin (52 aa).

Positions 1-24 (MQLNLGAIFLALLGVMATATSVLA) are cleaved as a signal peptide. The propeptide occupies 25 to 26 (EP). A disordered region spans residues 28-52 (RHQGPIFDTRPSPFNPNQPRPGPIY). A compositionally biased stretch (pro residues) spans 40 to 52 (PFNPNQPRPGPIY).

As to expression, hemolymph (at protein level). Highest expression in fat body.

It is found in the secreted. Functionally, potent antifungal and antibacterial activity against Gram-positive bacteria. The polypeptide is Metchnikowin (Mtk) (Drosophila melanogaster (Fruit fly)).